Here is a 184-residue protein sequence, read N- to C-terminus: Antigen Sm21.7 (184 aa).

Residues 37-72 (LDMKQVNEWIALFDVDKDQKITFEEFCRGLGLKQNE) form the EF-hand domain. Ca(2+)-binding residues include Asp50, Asp52, Asp54, Lys56, and Glu61.

The polypeptide is Antigen Sm21.7 (SM21.7) (Schistosoma mansoni (Blood fluke)).